A 559-amino-acid chain; its full sequence is Tissue-type plasminogen activator (559 aa).

A signal peptide spans M1 to T17. Residues L18–R29 constitute a propeptide that is removed on maturation. The propeptide at G30–R32 is removed by plasmin. Positions A36–V78 constitute a Fibronectin type-I domain. Intrachain disulfides connect C38/C68, C66/C75, C83/C94, C88/C105, C107/C116, C124/C205, C145/C187, C176/C200, C213/C294, C234/C276, C265/C289, C297/C428, C340/C356, C348/C417, C442/C516, C474/C490, and C506/C534. Positions R39 to Q49 are important for binding to annexin A2. Residues P79–D117 form the EGF-like domain. Kringle domains are found at residues C124 to C205 and C213 to C294. The N-linked (GlcNAc...) asparagine glycan is linked to N149. Residues I309–K558 form the Peptidase S1 domain. Catalysis depends on charge relay system residues H355 and D404. N481 carries N-linked (GlcNAc...) asparagine glycosylation. S510 acts as the Charge relay system in catalysis.

This sequence belongs to the peptidase S1 family. In terms of assembly, heterodimer of chain A and chain B held by a disulfide bond. Binds to fibrin with high affinity. This interaction leads to an increase in the catalytic efficiency of the enzyme due to an increase in affinity for plasminogen. Similarly, binding to heparin increases the activation of plasminogen. Binds to annexin A2, cytokeratin-8, fibronectin and laminin. Binds to mannose receptor and the low-density lipoprotein receptor-related protein (LRP1); these proteins are involved in TPA clearance. Binds LRP1B; binding is followed by internalization and degradation. Forms heterodimer with SERPINA5. Interacts with SERPINE1. In complex with SERPINE1, interacts with SORL1. In terms of processing, the single chain, almost fully active enzyme, can be further processed into a two-chain fully active form by a cleavage after Arg-308 catalyzed by plasmin, tissue kallikrein or factor Xa.

It localises to the secreted. It is found in the extracellular space. The enzyme catalyses Specific cleavage of Arg-|-Val bond in plasminogen to form plasmin.. Its activity is regulated as follows. Inhibited by SERPINA5. Inhibited by SERPINE1. Functionally, converts the abundant, but inactive, zymogen plasminogen to plasmin by hydrolyzing a single Arg-Val bond in plasminogen. By controlling plasmin-mediated proteolysis, it plays an important role in tissue remodeling and degradation, in cell migration and many other physiopathological events. During oocyte activation, plays a role in cortical granule reaction in the zona reaction, which contributes to the block to polyspermy. In Rattus norvegicus (Rat), this protein is Tissue-type plasminogen activator (Plat).